A 623-amino-acid chain; its full sequence is Regulatory solute carrier protein family 1 member 1 (623 aa).

Composition is skewed to polar residues over residues 1–16 (MSSLPTSDGFNHQAHP), 83–99 (CASSADNAPANQTPAIP), and 133–144 (EASLSVTTTRMQ). 4 disordered regions span residues 1 to 48 (MSSL…PDSI), 71 to 99 (RKEQLPLQDPSDCASSADNAPANQTPAIP), 116 to 189 (SAEG…APHD), and 433 to 493 (EELT…PHCT). Basic and acidic residues-rich tracts occupy residues 150–159 (IGEKGWHPEY), 170–180 (QHEEPRNEQHE), and 460–473 (LVDKENVPRSRESV). The span at 474 to 491 (NESSLVTLDSAKTSNQPH) shows a compositional bias: polar residues. The region spanning 577–617 (IFPAADIDRILRAGFTLQEALGALHRVGGNADLALLVLLAK) is the UBA domain.

In terms of assembly, interacts with YRDC. As to expression, renal outer cortex and outer medulla, small intestine and liver.

It localises to the cell membrane. Its subcellular location is the nucleus. It is found in the golgi apparatus. The protein resides in the trans-Golgi network. Mediates transcriptional and post-transcriptional regulation of SLC5A1. Inhibits a dynamin and PKC-dependent exocytotic pathway of SLC5A1. Also involved in transcriptional regulation of SLC22A2. Exhibits glucose-dependent, short-term inhibition of SLC5A1 and SLC22A2 by inhibiting the release of vesicles from the trans-Golgi network. This chain is Regulatory solute carrier protein family 1 member 1 (RSC1A1), found in Sus scrofa (Pig).